The primary structure comprises 156 residues: Maintenance of carboxysome distribution protein B (156 aa).

Residues 1 to 55 (MSNNALDRLINKQKPKVPPRNDVVSESVSNDIKTQGQQELNTSLPPSDTKATPEE) are required for interaction with McdA:DNA complex. The disordered stretch occupies residues 1–79 (MSNNALDRLI…QKPKLSPDTF (79 aa)). A compositionally biased stretch (polar residues) spans 24 to 50 (VSESVSNDIKTQGQQELNTSLPPSDTK). Positions 51 to 63 (ATPEEMPTSHESE) are enriched in basic and acidic residues. Positions 122-156 (PEELAQVIQLAQERLSQRKAIADYKRAKTMQERFL) form a coiled coil.

As to quaternary structure, homodimerizes; may exist in higher order oligomers in solution. Forms a complex with McdA:DNA. Homohexamerizes, interacts with shell components of the carboxysome.

The protein resides in the carboxysome. Functionally, mcdA and McdB together mediate carboxysome (Cb) spacing, size, ultrastructure and probably inheritance in the cell, together they prevent Cb aggregation. McdA is an ATPase that forms dynamic gradients on the nucleoid in response to adapter protein McdB, which associates with carboxysomes. The interplay between McdA gradients on the nucleoid and McdB-bound carboxysomes result in the equal spacing of Cbs along the cell length. Stimulates the ATPase activity of McdA, causing McdA to be released from DNA. Undergoes liquid-liquid phase separation. In terms of biological role, incorrect positioning (aggregation) of carboxysomes results in reduced CO(2) fixation by encapsulated ribulose-1,5-bisphosphate carboxylase (RuBisCO, cbbL/cbbS), which leads to slower growth. This chain is Maintenance of carboxysome distribution protein B, found in Gloeothece citriformis (strain PCC 7424) (Cyanothece sp. (strain PCC 7424)).